Reading from the N-terminus, the 541-residue chain is Light-independent protochlorophyllide reductase subunit B (541 aa).

Asp-36 provides a ligand contact to [4Fe-4S] cluster. Residue Asp-290 is the Proton donor of the active site. 425–426 (GL) lines the substrate pocket.

It belongs to the ChlB/BchB/BchZ family. As to quaternary structure, protochlorophyllide reductase is composed of three subunits; ChlL, ChlN and ChlB. Forms a heterotetramer of two ChlB and two ChlN subunits. [4Fe-4S] cluster serves as cofactor.

The enzyme catalyses chlorophyllide a + oxidized 2[4Fe-4S]-[ferredoxin] + 2 ADP + 2 phosphate = protochlorophyllide a + reduced 2[4Fe-4S]-[ferredoxin] + 2 ATP + 2 H2O. Its pathway is porphyrin-containing compound metabolism; chlorophyll biosynthesis (light-independent). Functionally, component of the dark-operative protochlorophyllide reductase (DPOR) that uses Mg-ATP and reduced ferredoxin to reduce ring D of protochlorophyllide (Pchlide) to form chlorophyllide a (Chlide). This reaction is light-independent. The NB-protein (ChlN-ChlB) is the catalytic component of the complex. In Synechococcus sp. (strain CC9902), this protein is Light-independent protochlorophyllide reductase subunit B.